We begin with the raw amino-acid sequence, 267 residues long: 4-hydroxy-tetrahydrodipicolinate reductase (267 aa).

NAD(+)-binding positions include 9 to 14 and aspartate 35; that span reads GVSGRM. Arginine 36 is a binding site for NADP(+). NAD(+) contacts are provided by residues 98 to 100 and 122 to 125; these read GTT and APNM. Histidine 155 (proton donor/acceptor) is an active-site residue. A (S)-2,3,4,5-tetrahydrodipicolinate-binding site is contributed by histidine 156. Catalysis depends on lysine 159, which acts as the Proton donor. 165-166 is a binding site for (S)-2,3,4,5-tetrahydrodipicolinate; the sequence is GT.

The protein belongs to the DapB family.

It is found in the cytoplasm. The enzyme catalyses (S)-2,3,4,5-tetrahydrodipicolinate + NAD(+) + H2O = (2S,4S)-4-hydroxy-2,3,4,5-tetrahydrodipicolinate + NADH + H(+). It catalyses the reaction (S)-2,3,4,5-tetrahydrodipicolinate + NADP(+) + H2O = (2S,4S)-4-hydroxy-2,3,4,5-tetrahydrodipicolinate + NADPH + H(+). Its pathway is amino-acid biosynthesis; L-lysine biosynthesis via DAP pathway; (S)-tetrahydrodipicolinate from L-aspartate: step 4/4. Catalyzes the conversion of 4-hydroxy-tetrahydrodipicolinate (HTPA) to tetrahydrodipicolinate. The sequence is that of 4-hydroxy-tetrahydrodipicolinate reductase from Thiobacillus denitrificans (strain ATCC 25259 / T1).